We begin with the raw amino-acid sequence, 161 residues long: Dihydrofolate reductase type 1 from Tn4003 (161 aa).

The DHFR domain occupies 2–157 (TLSIIVAHDK…IPHTFLHLVR (156 aa)). 6 to 8 (IVA) serves as a coordination point for substrate. NADP(+) is bound by residues 7 to 8 (VA) and 15 to 20 (IGYQNQ). Aspartate 28 contributes to the substrate binding site. NADP(+) is bound at residue 44–47 (ARKT). Arginine 58 contributes to the substrate binding site. NADP(+) is bound by residues 63–66 (LTNQ) and 93–98 (FGGQTL). Residue threonine 112 coordinates substrate.

This sequence belongs to the dihydrofolate reductase family.

It catalyses the reaction (6S)-5,6,7,8-tetrahydrofolate + NADP(+) = 7,8-dihydrofolate + NADPH + H(+). Its pathway is cofactor biosynthesis; tetrahydrofolate biosynthesis; 5,6,7,8-tetrahydrofolate from 7,8-dihydrofolate: step 1/1. Functionally, key enzyme in folate metabolism. Catalyzes an essential reaction for de novo glycine and purine synthesis, and for DNA precursor synthesis. The polypeptide is Dihydrofolate reductase type 1 from Tn4003 (dfrA) (Staphylococcus aureus).